A 418-amino-acid polypeptide reads, in one-letter code: Gamma-glutamyl phosphate reductase (418 aa).

The protein belongs to the gamma-glutamyl phosphate reductase family.

It is found in the cytoplasm. It catalyses the reaction L-glutamate 5-semialdehyde + phosphate + NADP(+) = L-glutamyl 5-phosphate + NADPH + H(+). The protein operates within amino-acid biosynthesis; L-proline biosynthesis; L-glutamate 5-semialdehyde from L-glutamate: step 2/2. In terms of biological role, catalyzes the NADPH-dependent reduction of L-glutamate 5-phosphate into L-glutamate 5-semialdehyde and phosphate. The product spontaneously undergoes cyclization to form 1-pyrroline-5-carboxylate. The chain is Gamma-glutamyl phosphate reductase from Histophilus somni (strain 129Pt) (Haemophilus somnus).